The chain runs to 1235 residues: ATP-dependent helicase/nuclease subunit A (1235 aa).

Positions 10-482 (SIWTDDQWSA…IDLNQNFRSR (473 aa)) constitute a UvrD-like helicase ATP-binding domain. 31 to 38 (AAAGSGKT) is an ATP binding site. Residues 509–799 (QAALKLGASY…RLMTIHSSKG (291 aa)) enclose the UvrD-like helicase C-terminal domain.

Belongs to the helicase family. AddA subfamily. Heterodimer of AddA and AddB/RexB. The cofactor is Mg(2+).

It catalyses the reaction Couples ATP hydrolysis with the unwinding of duplex DNA by translocating in the 3'-5' direction.. The enzyme catalyses ATP + H2O = ADP + phosphate + H(+). Its function is as follows. The heterodimer acts as both an ATP-dependent DNA helicase and an ATP-dependent, dual-direction single-stranded exonuclease. Recognizes the chi site generating a DNA molecule suitable for the initiation of homologous recombination. The AddA nuclease domain is required for chi fragment generation; this subunit has the helicase and 3' -&gt; 5' nuclease activities. The polypeptide is ATP-dependent helicase/nuclease subunit A (Bacillus velezensis (strain DSM 23117 / BGSC 10A6 / LMG 26770 / FZB42) (Bacillus amyloliquefaciens subsp. plantarum)).